The following is a 437-amino-acid chain: Peptidyl-prolyl cis-trans isomerase CYP38, chloroplastic (437 aa).

The N-terminal 36 residues, 1-36 (MAAAFASLPTFSVVNSSRFPRRRIGFSCSKKPLEVR), are a transit peptide targeting the chloroplast. Residues 37–92 (CSSGNTRYTKQRGAFTSLKECAISLALSVGLMVSVPSIALPPNAHAVANPVIPDVS) constitute a thylakoid transit peptide. Residues 245–437 (VKIKDNPNIE…LANPSYKIAG (193 aa)) form the PPIase cyclophilin-type domain.

Ubiquitous. Lower levels of expression in roots.

It is found in the plastid. The protein localises to the chloroplast thylakoid lumen. It carries out the reaction [protein]-peptidylproline (omega=180) = [protein]-peptidylproline (omega=0). Required for the assembly and stabilization of PSII, but has no PPIases activity. The sequence is that of Peptidyl-prolyl cis-trans isomerase CYP38, chloroplastic (CYP38) from Arabidopsis thaliana (Mouse-ear cress).